The primary structure comprises 174 residues: ATP synthase subunit delta, sodium ion specific (174 aa).

This sequence belongs to the ATPase delta chain family. In terms of assembly, F-type ATPases have 2 components, F(1) - the catalytic core - and F(0) - the membrane proton channel. F(1) has five subunits: alpha(3), beta(3), gamma(1), delta(1), epsilon(1). F(0) has three main subunits: a(1), b(2) and c(10-14). The alpha and beta chains form an alternating ring which encloses part of the gamma chain. F(1) is attached to F(0) by a central stalk formed by the gamma and epsilon chains, while a peripheral stalk is formed by the delta and b chains.

It localises to the cell inner membrane. In terms of biological role, f(1)F(0) ATP synthase produces ATP from ADP in the presence of a proton or sodium gradient. F-type ATPases consist of two structural domains, F(1) containing the extramembraneous catalytic core and F(0) containing the membrane proton channel, linked together by a central stalk and a peripheral stalk. During catalysis, ATP synthesis in the catalytic domain of F(1) is coupled via a rotary mechanism of the central stalk subunits to proton translocation. Functionally, this protein is part of the stalk that links CF(0) to CF(1). It either transmits conformational changes from CF(0) to CF(1) or is implicated in proton conduction. This Propionigenium modestum protein is ATP synthase subunit delta, sodium ion specific.